The sequence spans 145 residues: Aspartate 1-decarboxylase (145 aa).

Residue Ser-26 is the Schiff-base intermediate with substrate; via pyruvic acid of the active site. A Pyruvic acid (Ser) modification is found at Ser-26. Thr-58 is a binding site for substrate. The active-site Proton donor is the Tyr-59. Substrate is bound at residue 74 to 76 (GGA).

It belongs to the PanD family. Heterooctamer of four alpha and four beta subunits. It depends on pyruvate as a cofactor. Is synthesized initially as an inactive proenzyme, which is activated by self-cleavage at a specific serine bond to produce a beta-subunit with a hydroxyl group at its C-terminus and an alpha-subunit with a pyruvoyl group at its N-terminus.

The protein resides in the cytoplasm. It catalyses the reaction L-aspartate + H(+) = beta-alanine + CO2. Its pathway is cofactor biosynthesis; (R)-pantothenate biosynthesis; beta-alanine from L-aspartate: step 1/1. In terms of biological role, catalyzes the pyruvoyl-dependent decarboxylation of aspartate to produce beta-alanine. In Synechocystis sp. (strain ATCC 27184 / PCC 6803 / Kazusa), this protein is Aspartate 1-decarboxylase.